The chain runs to 188 residues: Ribosome maturation factor RimM (188 aa).

The PRC barrel domain maps to Asp96–Gly169.

It belongs to the RimM family. In terms of assembly, binds ribosomal protein uS19.

It is found in the cytoplasm. Functionally, an accessory protein needed during the final step in the assembly of 30S ribosomal subunit, possibly for assembly of the head region. Essential for efficient processing of 16S rRNA. May be needed both before and after RbfA during the maturation of 16S rRNA. It has affinity for free ribosomal 30S subunits but not for 70S ribosomes. The chain is Ribosome maturation factor RimM from Rhizobium etli (strain ATCC 51251 / DSM 11541 / JCM 21823 / NBRC 15573 / CFN 42).